Consider the following 289-residue polypeptide: Diaminopimelate epimerase (289 aa).

Residues Asn17, Gln47, and Asn67 each contribute to the substrate site. The active-site Proton donor is Cys76. Substrate is bound by residues 77 to 78 (GN), Asn164, Asn198, and 216 to 217 (ER). The active-site Proton acceptor is the Cys225. A substrate-binding site is contributed by 226–227 (GS).

It belongs to the diaminopimelate epimerase family. Homodimer.

It localises to the cytoplasm. The catalysed reaction is (2S,6S)-2,6-diaminopimelate = meso-2,6-diaminopimelate. It participates in amino-acid biosynthesis; L-lysine biosynthesis via DAP pathway; DL-2,6-diaminopimelate from LL-2,6-diaminopimelate: step 1/1. Its function is as follows. Catalyzes the stereoinversion of LL-2,6-diaminopimelate (L,L-DAP) to meso-diaminopimelate (meso-DAP), a precursor of L-lysine and an essential component of the bacterial peptidoglycan. The protein is Diaminopimelate epimerase of Bradyrhizobium sp. (strain ORS 278).